Here is a 150-residue protein sequence, read N- to C-terminus: Cell division protein SepF (150 aa).

This sequence belongs to the SepF family. In terms of assembly, homodimer. Interacts with FtsZ.

The protein localises to the cytoplasm. In terms of biological role, cell division protein that is part of the divisome complex and is recruited early to the Z-ring. Probably stimulates Z-ring formation, perhaps through the cross-linking of FtsZ protofilaments. Its function overlaps with FtsA. The protein is Cell division protein SepF of Clostridium beijerinckii (strain ATCC 51743 / NCIMB 8052) (Clostridium acetobutylicum).